Here is a 183-residue protein sequence, read N- to C-terminus: Capsid protein (183 aa).

A disordered region spans residues 136–183 (NAPILSTLPETTVVRRRGRSPRRRTPSPRRRRSQSPRRRRSQSRESQC). Basic residues predominate over residues 149-176 (VRRRGRSPRRRTPSPRRRRSQSPRRRRS). Phosphoserine; by host occurs at positions 155, 162, and 170. The stretch at 155–161 (SPRRRTP) is one 1; half-length repeat. Residues 155-177 (SPRRRTPSPRRRRSQSPRRRRSQ) are 3 X 8 AA repeats of S-P-R-R-R-[PR]-S-Q. Positions 158–175 (RRTPSPRRRRSQSPRRRR) match the Bipartite nuclear localization signal motif. A run of 2 repeats spans residues 162–169 (SPRRRRSQ) and 170–177 (SPRRRRSQ). An RNA binding region spans residues 177 to 183 (QSRESQC).

This sequence belongs to the orthohepadnavirus core antigen family. As to quaternary structure, homodimerizes, then multimerizes. Interacts with cytosol exposed regions of viral L glycoprotein present in the reticulum-to-Golgi compartment. Interacts with human FLNB. Phosphorylated form interacts with host importin alpha; this interaction depends on the exposure of the NLS, which itself depends upon genome maturation and/or phosphorylation of the capsid protein. Interacts with host NUP153. In terms of processing, phosphorylated by host SRPK1, SRPK2, and maybe protein kinase C or GAPDH. Phosphorylation is critical for pregenomic RNA packaging. Protein kinase C phosphorylation is stimulated by HBx protein and may play a role in transport of the viral genome to the nucleus at the late step during the viral replication cycle.

The protein resides in the virion. It is found in the host cytoplasm. In terms of biological role, self assembles to form an icosahedral capsid. Most capsids appear to be large particles with an icosahedral symmetry of T=4 and consist of 240 copies of capsid protein, though a fraction forms smaller T=3 particles consisting of 180 capsid proteins. Entering capsids are transported along microtubules to the nucleus. Phosphorylation of the capsid is thought to induce exposure of nuclear localization signal in the C-terminal portion of the capsid protein that allows binding to the nuclear pore complex via the importin (karyopherin-) alpha and beta. Capsids are imported in intact form through the nuclear pore into the nuclear basket, where it probably binds NUP153. Only capsids that contain the mature viral genome can release the viral DNA and capsid protein into the nucleoplasm. Immature capsids get stuck in the basket. Capsids encapsulate the pre-genomic RNA and the P protein. Pre-genomic RNA is reverse-transcribed into DNA while the capsid is still in the cytoplasm. The capsid can then either be directed to the nucleus, providing more genomes for transcription, or bud through the endoplasmic reticulum to provide new virions. The polypeptide is Capsid protein (Hepatitis B virus genotype B/C subtype adw (isolate Okinawa/pODW282/1998) (HBV-B)).